The primary structure comprises 244 residues: Thiol S-methyltransferase TMT1A (244 aa).

The segment at 1–28 (MELTIFILRLAIYILTFPLYLLNFLGLW) is targeting to lipid droplets. Positions 1-29 (MELTIFILRLAIYILTFPLYLLNFLGLWS) are cleaved as a signal peptide.

The protein belongs to the methyltransferase superfamily. (Microbial infection) Interacts with HCV non-structural protein 4B/NS4B (via C-terminal region); this interaction may promote the recruitment of NS4B in the proximity of lipid droplet. In terms of assembly, self-associates. Interacts with SNRNP200; this interaction may promote the odontogenic differentiation. In terms of processing, methylated at lysine residues most likely by EZH2. In terms of tissue distribution, expressed in the liver.

Its subcellular location is the lipid droplet. The protein resides in the endoplasmic reticulum. It is found in the membrane. The protein localises to the microsome. It localises to the cytoplasm. Its subcellular location is the cytosol. It carries out the reaction a thiol + S-adenosyl-L-methionine = a methyl thioether + S-adenosyl-L-homocysteine + H(+). The catalysed reaction is an adenosine in mRNA + S-adenosyl-L-methionine = an N(6)-methyladenosine in mRNA + S-adenosyl-L-homocysteine + H(+). Its activity is regulated as follows. Inhibited by 2,3-dichloro-alpha-methylbenzylamine (DCMB). Thiol S-methyltransferase that catalyzes the transfer of a methyl group from S-adenosyl-L-methionine to alkyl and phenolic thiol-containing acceptor substrates. Together with TMT1B accounts for most of S-thiol methylation activity in the endoplasmic reticulum of hepatocytes. Able to methylate the N6 position of adenosine residues in long non-coding RNAs (lncRNAs). May facilitate lncRNAs transfer into exosomes at the tumor-stroma interface. Promotes osteogenic and odontogenic differentiation by regulating the expression of genes involved in stem cell differentiation and survival. Targeted from the endoplasmic reticulum to lipid droplets, where it recruits cellular proteins to form functional organelles. Functionally, (Microbial infection) May be involved in the assembly and release stages of hepatitis C virus (HCV) life cycle and thus play a crucial role in HCV propagation. In Homo sapiens (Human), this protein is Thiol S-methyltransferase TMT1A.